The sequence spans 162 residues: NADPH-dependent 7-cyano-7-deazaguanine reductase (162 aa).

The active-site Thioimide intermediate is cysteine 53. Residue aspartate 60 is the Proton donor of the active site. Substrate-binding positions include 75–77 (VES) and 94–95 (HE).

This sequence belongs to the GTP cyclohydrolase I family. QueF type 1 subfamily.

It localises to the cytoplasm. It catalyses the reaction 7-aminomethyl-7-carbaguanine + 2 NADP(+) = 7-cyano-7-deazaguanine + 2 NADPH + 3 H(+). Its pathway is tRNA modification; tRNA-queuosine biosynthesis. Functionally, catalyzes the NADPH-dependent reduction of 7-cyano-7-deazaguanine (preQ0) to 7-aminomethyl-7-deazaguanine (preQ1). The polypeptide is NADPH-dependent 7-cyano-7-deazaguanine reductase (Exiguobacterium sp. (strain ATCC BAA-1283 / AT1b)).